A 222-amino-acid chain; its full sequence is GTP cyclohydrolase 1 (222 aa).

The Zn(2+) site is built by Cys-111, His-114, and Cys-182.

The protein belongs to the GTP cyclohydrolase I family. As to quaternary structure, homomer.

It catalyses the reaction GTP + H2O = 7,8-dihydroneopterin 3'-triphosphate + formate + H(+). The protein operates within cofactor biosynthesis; 7,8-dihydroneopterin triphosphate biosynthesis; 7,8-dihydroneopterin triphosphate from GTP: step 1/1. The chain is GTP cyclohydrolase 1 from Shigella boydii serotype 18 (strain CDC 3083-94 / BS512).